Here is a 580-residue protein sequence, read N- to C-terminus: NADH-ubiquinone oxidoreductase chain 5 (580 aa).

Transmembrane regions (helical) follow at residues Phe-12–Met-32, Ile-50–Ile-70, Ile-92–Ile-112, Ser-113–Gln-133, Val-153–Tyr-173, Met-183–Phe-203, Thr-215–Ile-235, Trp-244–Gly-264, Ile-274–Gly-293, Ala-298–Ile-320, Cys-343–Tyr-363, Leu-367–Phe-387, Ile-427–Leu-447, Leu-463–Phe-483, Phe-496–Leu-516, and Ile-560–Asn-580.

This sequence belongs to the complex I subunit 5 family.

It is found in the mitochondrion inner membrane. The enzyme catalyses a ubiquinone + NADH + 5 H(+)(in) = a ubiquinol + NAD(+) + 4 H(+)(out). Its function is as follows. Core subunit of the mitochondrial membrane respiratory chain NADH dehydrogenase (Complex I) that is believed to belong to the minimal assembly required for catalysis. Complex I functions in the transfer of electrons from NADH to the respiratory chain. The immediate electron acceptor for the enzyme is believed to be ubiquinone. This Anopheles gambiae (African malaria mosquito) protein is NADH-ubiquinone oxidoreductase chain 5 (mt:ND5).